Consider the following 152-residue polypeptide: Ribosomal RNA large subunit methyltransferase H (152 aa).

Residues leucine 70, glycine 102, and 120-125 contribute to the S-adenosyl-L-methionine site; that span reads LSPMTF.

Belongs to the RNA methyltransferase RlmH family. As to quaternary structure, homodimer.

The protein localises to the cytoplasm. It carries out the reaction pseudouridine(1915) in 23S rRNA + S-adenosyl-L-methionine = N(3)-methylpseudouridine(1915) in 23S rRNA + S-adenosyl-L-homocysteine + H(+). In terms of biological role, specifically methylates the pseudouridine at position 1915 (m3Psi1915) in 23S rRNA. This is Ribosomal RNA large subunit methyltransferase H from Pelobacter propionicus (strain DSM 2379 / NBRC 103807 / OttBd1).